We begin with the raw amino-acid sequence, 426 residues long: Glutamate-1-semialdehyde 2,1-aminomutase (426 aa).

K265 carries the N6-(pyridoxal phosphate)lysine modification.

This sequence belongs to the class-III pyridoxal-phosphate-dependent aminotransferase family. HemL subfamily. In terms of assembly, homodimer. The cofactor is pyridoxal 5'-phosphate.

It localises to the cytoplasm. The catalysed reaction is (S)-4-amino-5-oxopentanoate = 5-aminolevulinate. It participates in porphyrin-containing compound metabolism; protoporphyrin-IX biosynthesis; 5-aminolevulinate from L-glutamyl-tRNA(Glu): step 2/2. This Hydrogenovibrio crunogenus (strain DSM 25203 / XCL-2) (Thiomicrospira crunogena) protein is Glutamate-1-semialdehyde 2,1-aminomutase.